The primary structure comprises 158 residues: NAD(P)H-quinone oxidoreductase subunit J, chloroplastic (158 aa).

It belongs to the complex I 30 kDa subunit family. In terms of assembly, NDH is composed of at least 16 different subunits, 5 of which are encoded in the nucleus.

It localises to the plastid. It is found in the chloroplast thylakoid membrane. The catalysed reaction is a plastoquinone + NADH + (n+1) H(+)(in) = a plastoquinol + NAD(+) + n H(+)(out). The enzyme catalyses a plastoquinone + NADPH + (n+1) H(+)(in) = a plastoquinol + NADP(+) + n H(+)(out). In terms of biological role, NDH shuttles electrons from NAD(P)H:plastoquinone, via FMN and iron-sulfur (Fe-S) centers, to quinones in the photosynthetic chain and possibly in a chloroplast respiratory chain. The immediate electron acceptor for the enzyme in this species is believed to be plastoquinone. Couples the redox reaction to proton translocation, and thus conserves the redox energy in a proton gradient. This is NAD(P)H-quinone oxidoreductase subunit J, chloroplastic from Aethionema cordifolium (Lebanon stonecress).